Reading from the N-terminus, the 415-residue chain is Homoserine O-acetyltransferase (415 aa).

The region spanning Asn-47–Pro-369 is the AB hydrolase-1 domain. The active-site Nucleophile is Ser-155. Arg-226 is a substrate binding site. Catalysis depends on residues Asp-329 and His-362. Position 363 (Asp-363) interacts with substrate. The disordered stretch occupies residues Gly-383–Arg-415.

It belongs to the AB hydrolase superfamily. MetX family. Homodimer.

It localises to the cytoplasm. The enzyme catalyses L-homoserine + acetyl-CoA = O-acetyl-L-homoserine + CoA. It participates in amino-acid biosynthesis; L-methionine biosynthesis via de novo pathway; O-acetyl-L-homoserine from L-homoserine: step 1/1. Transfers an acetyl group from acetyl-CoA to L-homoserine, forming acetyl-L-homoserine. The sequence is that of Homoserine O-acetyltransferase from Haloferax volcanii (strain ATCC 29605 / DSM 3757 / JCM 8879 / NBRC 14742 / NCIMB 2012 / VKM B-1768 / DS2) (Halobacterium volcanii).